Reading from the N-terminus, the 91-residue chain is UPF0358 protein Sca_0738 (91 aa).

The protein belongs to the UPF0358 family.

This is UPF0358 protein Sca_0738 from Staphylococcus carnosus (strain TM300).